We begin with the raw amino-acid sequence, 73 residues long: Hypotensin-like peptide (73 aa).

The N-terminal stretch at 1 to 25 (MKMMIAIVFVSILLLMFSLSSTAMG) is a signal peptide.

In terms of tissue distribution, expressed by the venom gland.

Its subcellular location is the secreted. In terms of biological role, may potentiate the hypotensive effect of bradykinin. This Tityus serrulatus (Brazilian scorpion) protein is Hypotensin-like peptide.